The primary structure comprises 556 residues: Formate--tetrahydrofolate ligase 1 (556 aa).

Position 65–72 (65–72) interacts with ATP; it reads TPAGEGKT.

It belongs to the formate--tetrahydrofolate ligase family.

It carries out the reaction (6S)-5,6,7,8-tetrahydrofolate + formate + ATP = (6R)-10-formyltetrahydrofolate + ADP + phosphate. Its pathway is one-carbon metabolism; tetrahydrofolate interconversion. This chain is Formate--tetrahydrofolate ligase 1, found in Desulfitobacterium hafniense (strain Y51).